A 410-amino-acid chain; its full sequence is Na(+)/H(+) antiporter NhaS4 (410 aa).

11 helical membrane-spanning segments follow: residues 7 to 27 (LLIL…GLLF), 33 to 53 (PPVI…LGLL), 69 to 89 (FLYL…GLEL), 107 to 127 (VSIF…LYSL), 135 to 155 (FIPF…PVLA), 173 to 193 (LTCA…AIAV), 199 to 219 (IFGA…MVTL), 241 to 261 (LLTF…WIGI), 291 to 311 (FVST…TDLG), 319 to 339 (WAVC…GVYV), and 376 to 396 (GVIS…TTII).

It belongs to the monovalent cation:proton antiporter 2 (CPA2) transporter (TC 2.A.37) family.

It localises to the membrane. In terms of biological role, na(+)/H(+) antiporter. This chain is Na(+)/H(+) antiporter NhaS4 (nhaS4), found in Synechocystis sp. (strain ATCC 27184 / PCC 6803 / Kazusa).